Here is a 264-residue protein sequence, read N- to C-terminus: tRNA (guanine-N(1)-)-methyltransferase (264 aa).

Residues Gly-125 and 145-150 (LGDFVL) contribute to the S-adenosyl-L-methionine site.

It belongs to the RNA methyltransferase TrmD family. Homodimer.

It is found in the cytoplasm. The enzyme catalyses guanosine(37) in tRNA + S-adenosyl-L-methionine = N(1)-methylguanosine(37) in tRNA + S-adenosyl-L-homocysteine + H(+). Specifically methylates guanosine-37 in various tRNAs. The chain is tRNA (guanine-N(1)-)-methyltransferase from Burkholderia cenocepacia (strain HI2424).